A 223-amino-acid chain; its full sequence is Pyridoxine/pyridoxamine 5'-phosphate oxidase (223 aa).

Residues 8 to 11 and K65 contribute to the substrate site; that span reads RVDY. Residues 60-65, 75-76, R81, K82, and Q104 contribute to the FMN site; these read RTVLLK and YT. 3 residues coordinate substrate: Y122, R126, and S130. FMN contacts are provided by residues 139–140 and W188; that span reads QS. 194 to 196 contacts substrate; sequence RLH. R198 provides a ligand contact to FMN.

The protein belongs to the pyridoxamine 5'-phosphate oxidase family. Homodimer. FMN serves as cofactor.

The catalysed reaction is pyridoxamine 5'-phosphate + O2 + H2O = pyridoxal 5'-phosphate + H2O2 + NH4(+). It catalyses the reaction pyridoxine 5'-phosphate + O2 = pyridoxal 5'-phosphate + H2O2. The protein operates within cofactor metabolism; pyridoxal 5'-phosphate salvage; pyridoxal 5'-phosphate from pyridoxamine 5'-phosphate: step 1/1. It functions in the pathway cofactor metabolism; pyridoxal 5'-phosphate salvage; pyridoxal 5'-phosphate from pyridoxine 5'-phosphate: step 1/1. Functionally, catalyzes the oxidation of either pyridoxine 5'-phosphate (PNP) or pyridoxamine 5'-phosphate (PMP) into pyridoxal 5'-phosphate (PLP). This Kineococcus radiotolerans (strain ATCC BAA-149 / DSM 14245 / SRS30216) protein is Pyridoxine/pyridoxamine 5'-phosphate oxidase.